A 1040-amino-acid polypeptide reads, in one-letter code: Multidrug resistance protein MdtB (1040 aa).

11 helical membrane passes run 15 to 37 (LFIL…GIIG), 343 to 365 (VQFE…LRNA), 369 to 391 (LIPS…FLGF), 398 to 420 (LMAL…ENIA), 440 to 462 (IGFT…LFMG), 474 to 496 (VTLA…MMCA), 535 to 557 (HPWL…YIWI), 867 to 889 (VWLI…ESFI), 909 to 931 (LMMA…IGIV), 968 to 990 (ILMT…GVGA), and 1000 to 1022 (MVGG…YLLF).

Belongs to the resistance-nodulation-cell division (RND) (TC 2.A.6) family. MdtB subfamily. In terms of assembly, part of a tripartite efflux system composed of MdtA, MdtB and MdtC. MdtB forms a heteromultimer with MdtC.

It is found in the cell inner membrane. The protein is Multidrug resistance protein MdtB of Pectobacterium atrosepticum (strain SCRI 1043 / ATCC BAA-672) (Erwinia carotovora subsp. atroseptica).